Reading from the N-terminus, the 696-residue chain is Polyribonucleotide nucleotidyltransferase (696 aa).

Mg(2+) contacts are provided by Asp-489 and Asp-495. The 60-residue stretch at 556–615 folds into the KH domain; it reads PQYVTMKINPEKIRDVIGKGGVVIREITEATNCAIDISDDGTIKIAAHTTEEGEAAKRRI. The S1 motif domain occupies 625 to 693; sequence GKVYEGTVVK…RQGRVRLSMK (69 aa).

It belongs to the polyribonucleotide nucleotidyltransferase family. Component of the RNA degradosome, which is a multiprotein complex involved in RNA processing and mRNA degradation. Mg(2+) serves as cofactor.

The protein localises to the cytoplasm. The enzyme catalyses RNA(n+1) + phosphate = RNA(n) + a ribonucleoside 5'-diphosphate. In terms of biological role, involved in mRNA degradation. Catalyzes the phosphorolysis of single-stranded polyribonucleotides processively in the 3'- to 5'-direction. The polypeptide is Polyribonucleotide nucleotidyltransferase (Coxiella burnetii (strain CbuG_Q212) (Coxiella burnetii (strain Q212))).